We begin with the raw amino-acid sequence, 105 residues long: Large ribosomal subunit protein bL21 (105 aa).

The protein belongs to the bacterial ribosomal protein bL21 family. Part of the 50S ribosomal subunit. Contacts protein L20.

In terms of biological role, this protein binds to 23S rRNA in the presence of protein L20. In Dictyoglomus turgidum (strain DSM 6724 / Z-1310), this protein is Large ribosomal subunit protein bL21.